The primary structure comprises 119 residues: MMKLYSLVIIATLAAAAFAATSEEISAAVGEIISQHQEDLERYAKVVERGEEPKKYIRCSKQLGESCYLNCECCGAAAVCEDYKYICKEKVSDNSVLNALGQAWNAVGNSISRYYCDAE.

The N-terminal stretch at 1–19 (MMKLYSLVIIATLAAAAFA) is a signal peptide. 4 cysteine pairs are disulfide-bonded: Cys-59–Cys-74, Cys-67–Cys-80, Cys-71–Cys-116, and Cys-73–Cys-87.

The protein belongs to the neurotoxin 25 family. ICK-8 subfamily. In terms of tissue distribution, expressed by the venom gland.

The protein localises to the secreted. Functionally, ion channel inhibitor. The protein is Toxin ICK-11 of Trittame loki (Brush-footed trapdoor spider).